Reading from the N-terminus, the 196-residue chain is Holliday junction resolvase RecU (196 aa).

Mg(2+) is bound by residues T82, D84, E97, and Q116.

Belongs to the RecU family. The cofactor is Mg(2+).

It is found in the cytoplasm. The enzyme catalyses Endonucleolytic cleavage at a junction such as a reciprocal single-stranded crossover between two homologous DNA duplexes (Holliday junction).. Endonuclease that resolves Holliday junction intermediates in genetic recombination. Cleaves mobile four-strand junctions by introducing symmetrical nicks in paired strands. Promotes annealing of linear ssDNA with homologous dsDNA. Required for DNA repair, homologous recombination and chromosome segregation. In Oceanobacillus iheyensis (strain DSM 14371 / CIP 107618 / JCM 11309 / KCTC 3954 / HTE831), this protein is Holliday junction resolvase RecU.